The following is a 300-amino-acid chain: GTPase Era (300 aa).

An Era-type G domain is found at 5 to 176; sequence HSGFVCLVGR…IDVLAAALPA (172 aa). A G1 region spans residues 13–20; the sequence is GRPNTGKS. Position 13-20 (13-20) interacts with GTP; that stretch reads GRPNTGKS. Residues 39-43 are G2; sequence QTTRH. The G3 stretch occupies residues 60 to 63; sequence DTPG. GTP-binding positions include 60 to 64 and 125 to 128; these read DTPGL and TKID. The G4 stretch occupies residues 125-128; that stretch reads TKID. Residues 155-157 are G5; that stretch reads VSA. The KH type-2 domain occupies 207–286; it reads VRDELPHSLA…YLDLRVKVAK (80 aa).

Belongs to the TRAFAC class TrmE-Era-EngA-EngB-Septin-like GTPase superfamily. Era GTPase family. Monomer.

Its subcellular location is the cell envelope. The protein localises to the secreted. The protein resides in the cell wall. In terms of biological role, exhibits GTPase activity. Binds RNA but is probably not involved in ribosome assembly in mycobacteria. This is GTPase Era from Mycobacterium bovis (strain ATCC BAA-935 / AF2122/97).